Here is a 560-residue protein sequence, read N- to C-terminus: Nitrite reductase (560 aa).

The signal sequence occupies residues 1-26 (MSNVGKPILAGLIAGLSLLGLAVAQA). The interval 27–29 (AAP) is N-terminal tail. The Cytochrome c domain maps to 30 to 126 (EMTAEEKEAS…ARYIQHTPDI (97 aa)). The heme c site is built by Cys-47, Cys-50, and His-51. The disordered stretch occupies residues 61–80 (KNLEPHWSKTEADGKKTEGG). The segment covering 63 to 78 (LEPHWSKTEADGKKTE) has biased composition (basic and acidic residues). The heme c site is built by Thr-97 and Met-101. Residues 127–560 (PPEFSLQDMK…NVFNTMNDVY (434 aa)) form a D1-heme domain region. 6 residues coordinate heme d1: His-193, Arg-236, Ser-237, Tyr-256, Arg-382, and Gln-500.

As to quaternary structure, homodimer in solution. It depends on heme c as a cofactor. Heme is required as a cofactor.

It is found in the periplasm. It catalyses the reaction nitric oxide + Fe(III)-[cytochrome c] + H2O = Fe(II)-[cytochrome c] + nitrite + 2 H(+). The enzyme catalyses A + NH4(+) + H2O = hydroxylamine + AH2 + H(+). The sequence is that of Nitrite reductase (nirS) from Stutzerimonas stutzeri (Pseudomonas stutzeri).